The primary structure comprises 229 residues: Phosphatidylinositol N-acetylglucosaminyltransferase subunit GPI15 (229 aa).

Transmembrane regions (helical) follow at residues 59–79 (IQYH…VICL) and 101–121 (ILII…GPSV).

The protein belongs to the PIGH family. In terms of assembly, component of the phosphatidylinositol N-acetylglucosaminyltransferase (GPI-GlcNAc transferase) complex composed of at least GPI1, GPI2, GPI3, GPI15, GPI19 and ERI1.

It is found in the membrane. The catalysed reaction is a 1,2-diacyl-sn-glycero-3-phospho-(1D-myo-inositol) + UDP-N-acetyl-alpha-D-glucosamine = a 6-(N-acetyl-alpha-D-glucosaminyl)-1-(1,2-diacyl-sn-glycero-3-phospho)-1D-myo-inositol + UDP + H(+). The protein operates within glycolipid biosynthesis; glycosylphosphatidylinositol-anchor biosynthesis. Part of the complex catalyzing the transfer of N-acetylglucosamine from UDP-N-acetylglucosamine to phosphatidylinositol, the first step of GPI biosynthesis. The polypeptide is Phosphatidylinositol N-acetylglucosaminyltransferase subunit GPI15 (GPI15) (Saccharomyces cerevisiae (strain ATCC 204508 / S288c) (Baker's yeast)).